Here is a 603-residue protein sequence, read N- to C-terminus: NADH-ubiquinone oxidoreductase chain 5 (603 aa).

16 helical membrane passes run 4 to 24, 36 to 56, 87 to 107, 114 to 134, 137 to 157, 171 to 191, 200 to 220, 241 to 261, 272 to 292, 301 to 320, 325 to 347, 366 to 386, 407 to 429, 457 to 477, 482 to 502, and 583 to 603; these read YTTM…ATLI, VKMT…MFMC, MMFI…SLWY, INQF…LVTA, LFQL…LIGW, AILY…WFLL, QMIL…LLAA, TPVS…FLLI, LIQT…AICA, IVAF…IGIN, AFLH…GSII, LPLT…MPFL, WALS…MILL, LTIG…PTSP, IPLY…LTAF, and MIKL…LLIM.

The protein belongs to the complex I subunit 5 family. As to quaternary structure, core subunit of respiratory chain NADH dehydrogenase (Complex I) which is composed of 45 different subunits.

The protein localises to the mitochondrion inner membrane. The catalysed reaction is a ubiquinone + NADH + 5 H(+)(in) = a ubiquinol + NAD(+) + 4 H(+)(out). Core subunit of the mitochondrial membrane respiratory chain NADH dehydrogenase (Complex I) which catalyzes electron transfer from NADH through the respiratory chain, using ubiquinone as an electron acceptor. Essential for the catalytic activity and assembly of complex I. The chain is NADH-ubiquinone oxidoreductase chain 5 (MT-ND5) from Hylobates lar (Lar gibbon).